Consider the following 364-residue polypeptide: Putative [LysW]-aminoadipate semialdehyde/glutamate semialdehyde transaminase (364 aa).

Pyridoxal 5'-phosphate-binding positions include 90–91 (GT) and phenylalanine 117. Arginine 120 is a binding site for substrate. 202-205 (DEVQ) contacts pyridoxal 5'-phosphate. Lysine 230 bears the N6-(pyridoxal phosphate)lysine mark. Serine 254 is a binding site for substrate. Threonine 255 is a binding site for pyridoxal 5'-phosphate.

Belongs to the class-III pyridoxal-phosphate-dependent aminotransferase family. LysJ subfamily. As to quaternary structure, homodimer. Pyridoxal 5'-phosphate is required as a cofactor.

The protein localises to the cytoplasm. The enzyme catalyses [amino-group carrier protein]-C-terminal-gamma-(L-lysyl)-L-glutamate + 2-oxoglutarate = [amino-group carrier protein]-C-terminal-N-(1-carboxy-5-oxopentan-1-yl)-L-glutamine + L-glutamate. It carries out the reaction [amino-group carrier protein]-C-terminal-gamma-(L-ornithyl)-L-glutamate + 2-oxoglutarate = [amino-group carrier protein]-C-terminal-gamma-(L-glutamyl-5-semialdehyde)-L-glutamate + L-glutamate. The protein operates within amino-acid biosynthesis; L-lysine biosynthesis via AAA pathway; L-lysine from L-alpha-aminoadipate (Thermus route): step 4/5. It functions in the pathway amino-acid biosynthesis; L-arginine biosynthesis. In terms of biological role, involved in both the arginine and lysine biosynthetic pathways. The polypeptide is Putative [LysW]-aminoadipate semialdehyde/glutamate semialdehyde transaminase (Pyrococcus abyssi (strain GE5 / Orsay)).